Reading from the N-terminus, the 1102-residue chain is Carbamoyl phosphate synthase large chain (1102 aa).

Residues 1-408 (MPKRTDIQSV…ALQKALRSLE (408 aa)) are carboxyphosphate synthetic domain. Residues Arg-129, Arg-175, Gly-181, Gly-182, Glu-214, Ile-216, Glu-221, Gly-247, Val-248, His-249, Gln-291, and Glu-305 each contribute to the ATP site. Positions 138–334 (AVRAKIGHGE…IAKIAAKLAV (197 aa)) constitute an ATP-grasp 1 domain. Mg(2+)-binding residues include Gln-291, Glu-305, and Asn-307. Mn(2+) contacts are provided by Gln-291, Glu-305, and Asn-307. The interval 409–551 (KKGSQFTFVG…YFYSSYDEES (143 aa)) is oligomerization domain. The segment at 552-954 (EVAPREKPAV…AYAKSQAGAY (403 aa)) is carbamoyl phosphate synthetic domain. In terms of domain architecture, ATP-grasp 2 spans 682 to 873 (GQVLAEAGLP…LAKAAARISL (192 aa)). ATP is bound by residues Arg-718, Arg-757, Leu-759, Glu-764, Gly-789, Ile-790, His-791, Ser-792, Gln-832, and Glu-844. Mg(2+)-binding residues include Gln-832, Glu-844, and Asn-846. The Mn(2+) site is built by Gln-832, Glu-844, and Asn-846. Positions 955–1100 (GPLPTKGRAF…QEHAEHLTAA (146 aa)) constitute an MGS-like domain. The interval 955 to 1102 (GPLPTKGRAF…HAEHLTAARD (148 aa)) is allosteric domain.

It belongs to the CarB family. As to quaternary structure, composed of two chains; the small (or glutamine) chain promotes the hydrolysis of glutamine to ammonia, which is used by the large (or ammonia) chain to synthesize carbamoyl phosphate. Tetramer of heterodimers (alpha,beta)4. It depends on Mg(2+) as a cofactor. Requires Mn(2+) as cofactor.

It catalyses the reaction hydrogencarbonate + L-glutamine + 2 ATP + H2O = carbamoyl phosphate + L-glutamate + 2 ADP + phosphate + 2 H(+). It carries out the reaction hydrogencarbonate + NH4(+) + 2 ATP = carbamoyl phosphate + 2 ADP + phosphate + 2 H(+). The protein operates within amino-acid biosynthesis; L-arginine biosynthesis; carbamoyl phosphate from bicarbonate: step 1/1. It participates in pyrimidine metabolism; UMP biosynthesis via de novo pathway; (S)-dihydroorotate from bicarbonate: step 1/3. Large subunit of the glutamine-dependent carbamoyl phosphate synthetase (CPSase). CPSase catalyzes the formation of carbamoyl phosphate from the ammonia moiety of glutamine, carbonate, and phosphate donated by ATP, constituting the first step of 2 biosynthetic pathways, one leading to arginine and/or urea and the other to pyrimidine nucleotides. The large subunit (synthetase) binds the substrates ammonia (free or transferred from glutamine from the small subunit), hydrogencarbonate and ATP and carries out an ATP-coupled ligase reaction, activating hydrogencarbonate by forming carboxy phosphate which reacts with ammonia to form carbamoyl phosphate. The polypeptide is Carbamoyl phosphate synthase large chain (Streptomyces avermitilis (strain ATCC 31267 / DSM 46492 / JCM 5070 / NBRC 14893 / NCIMB 12804 / NRRL 8165 / MA-4680)).